The primary structure comprises 75 residues: Protein SlyX homolog (75 aa).

A disordered region spans residues 56-75 (KNMDSSNMEDPANEPPPPHY).

The protein belongs to the SlyX family.

In Vibrio parahaemolyticus serotype O3:K6 (strain RIMD 2210633), this protein is Protein SlyX homolog.